Reading from the N-terminus, the 648-residue chain is Replication restart protein PriA (648 aa).

Residues 131-297 (TILNESNKPT…KTHKYQLVTL (167 aa)) form the Helicase ATP-binding domain. 144 to 151 (GVTGSGKT) contacts ATP. The short motif at 240-243 (DEEH) is the DEAH box element. Positions 358, 361, 367, 370, 385, 388, 398, and 401 each coordinate Zn(2+). Residues 375 to 548 (VLHKATKKLE…RFFTNELEIR (174 aa)) form the Helicase C-terminal domain.

Belongs to the helicase family. PriA subfamily. As to quaternary structure, component of the replication restart primosome. Zn(2+) is required as a cofactor.

The catalysed reaction is Couples ATP hydrolysis with the unwinding of duplex DNA by translocating in the 3'-5' direction.. It catalyses the reaction ATP + H2O = ADP + phosphate + H(+). In terms of biological role, initiates the restart of stalled replication forks, which reloads the replicative helicase on sites other than the origin of replication. Recognizes and binds to abandoned replication forks and remodels them to uncover a helicase loading site. Promotes assembly of the primosome at these replication forks. The chain is Replication restart protein PriA from Rickettsia prowazekii (strain Madrid E).